The primary structure comprises 690 residues: Glycine--tRNA ligase beta subunit (690 aa).

Belongs to the class-II aminoacyl-tRNA synthetase family. In terms of assembly, tetramer of two alpha and two beta subunits.

The protein resides in the cytoplasm. It carries out the reaction tRNA(Gly) + glycine + ATP = glycyl-tRNA(Gly) + AMP + diphosphate. The protein is Glycine--tRNA ligase beta subunit of Pediococcus pentosaceus (strain ATCC 25745 / CCUG 21536 / LMG 10740 / 183-1w).